We begin with the raw amino-acid sequence, 1728 residues long: Protein NETWORKED 1A (1728 aa).

Residues 13–92 (YSWWWDSHIP…ERYDHATVEL (80 aa)) form the NAB domain. Coiled coils occupy residues 155–446 (LGNS…LEIE), 476–827 (MLRD…QVEI), 857–885 (FSEK…EIDN), 954–1016 (QFQS…AELQ), 1090–1323 (EQAE…KETV), 1403–1431 (LLQD…LRRR), and 1576–1684 (RRLA…TKSK). The disordered stretch occupies residues 1419–1441 (AEEKKRRGKLRRRSSSHRSKDRK). Residues 1424-1439 (RRGKLRRRSSSHRSKD) are compositionally biased toward basic residues.

The protein belongs to the NET family. As to quaternary structure, interacts with F-actin. In terms of tissue distribution, expressed in root meristems and at very low levels throughout mature vasculature.

Its subcellular location is the cytoplasm. The protein resides in the cytoskeleton. The protein localises to the cell membrane. It localises to the cell junction. It is found in the plasmodesma. Its function is as follows. Plant-specific actin binding protein. Associates with F-actin at the plasma membrane and plasmodesmata. May be part of a membrane-cytoskeletal adapter complex. This chain is Protein NETWORKED 1A, found in Arabidopsis thaliana (Mouse-ear cress).